Reading from the N-terminus, the 349-residue chain is Sensory histidine kinase/phosphatase NtrB (349 aa).

Positions 5–78 (TLPDAGQILN…SLAAGQGFTD (74 aa)) constitute a PAS domain. Residues 136-349 (GLAHEIKNPL…EFSVYLPIRK (214 aa)) form the Histidine kinase domain. The residue at position 139 (His139) is a Phosphohistidine; by autocatalysis. Residue Lys329 coordinates ATP.

Post-translationally, autophosphorylated.

The protein resides in the cytoplasm. It carries out the reaction ATP + protein L-histidine = ADP + protein N-phospho-L-histidine.. Its function is as follows. Member of the two-component regulatory system NtrB/NtrC, which controls expression of the nitrogen-regulated (ntr) genes in response to nitrogen limitation. Under conditions of nitrogen limitation, NtrB autophosphorylates and transfers the phosphoryl group to NtrC. In the presence of nitrogen, acts as a phosphatase that dephosphorylates and inactivates NtrC. The protein is Sensory histidine kinase/phosphatase NtrB (ntrB) of Klebsiella oxytoca.